A 722-amino-acid polypeptide reads, in one-letter code: Probable dipeptidyl-peptidase 5 (722 aa).

The N-terminal stretch at 1-18 (MGALRWLSLAAAASSALA) is a signal peptide. N-linked (GlcNAc...) asparagine glycosylation is found at N75, N78, N86, N94, N151, N253, and N448. The Charge relay system role is filled by S558. N-linked (GlcNAc...) asparagine glycosylation is present at N605. Residues D641 and H673 each act as charge relay system in the active site.

Belongs to the peptidase S9C family.

It localises to the secreted. Functionally, extracellular dipeptidyl-peptidase which removes N-terminal dipeptides sequentially from polypeptides having unsubstituted N-termini. The protein is Probable dipeptidyl-peptidase 5 (dpp5) of Emericella nidulans (strain FGSC A4 / ATCC 38163 / CBS 112.46 / NRRL 194 / M139) (Aspergillus nidulans).